A 545-amino-acid polypeptide reads, in one-letter code: Glucose-6-phosphate isomerase (545 aa).

Catalysis depends on Glu351, which acts as the Proton donor. Active-site residues include His382 and Lys510.

Belongs to the GPI family.

It is found in the cytoplasm. It catalyses the reaction alpha-D-glucose 6-phosphate = beta-D-fructose 6-phosphate. It participates in carbohydrate biosynthesis; gluconeogenesis. Its pathway is carbohydrate degradation; glycolysis; D-glyceraldehyde 3-phosphate and glycerone phosphate from D-glucose: step 2/4. Functionally, catalyzes the reversible isomerization of glucose-6-phosphate to fructose-6-phosphate. This is Glucose-6-phosphate isomerase from Shewanella loihica (strain ATCC BAA-1088 / PV-4).